The chain runs to 54 residues: uncharacterized protein (54 aa).

The helical transmembrane segment at 6 to 26 (ILIYLLIFVAGIVIGKIRINV) threads the bilayer.

It localises to the host membrane. This is an uncharacterized protein from Acidianus convivator (ABV).